The sequence spans 88 residues: Small ribosomal subunit protein bS20 (88 aa).

The segment covering Met1–Ser22 has biased composition (basic residues). Residues Met1–Ser26 are disordered.

The protein belongs to the bacterial ribosomal protein bS20 family.

In terms of biological role, binds directly to 16S ribosomal RNA. The chain is Small ribosomal subunit protein bS20 from Wigglesworthia glossinidia brevipalpis.